The primary structure comprises 204 residues: Outer-membrane lipoprotein carrier protein (204 aa).

The signal sequence occupies residues 1-21 (MKKIAIVGALLTSFVASSVWA). The tract at residues 169-204 (QRSSYQLKSQQNGAIDASKFTFTPPQGVTVDDQRNK) is disordered. Positions 171 to 181 (SSYQLKSQQNG) are enriched in polar residues.

Belongs to the LolA family. In terms of assembly, monomer.

The protein resides in the periplasm. In terms of biological role, participates in the translocation of lipoproteins from the inner membrane to the outer membrane. Only forms a complex with a lipoprotein if the residue after the N-terminal Cys is not an aspartate (The Asp acts as a targeting signal to indicate that the lipoprotein should stay in the inner membrane). This chain is Outer-membrane lipoprotein carrier protein, found in Enterobacter sp. (strain 638).